The chain runs to 389 residues: Pregnancy-associated glycoprotein 1 (389 aa).

An N-terminal signal peptide occupies residues 1-15 (MKWLVILGLVALSEC). The region spanning 76 to 386 (YVGNITIGTP…DRGQNRIGLR (311 aa)) is the Peptidase A1 domain. N-linked (GlcNAc...) asparagine glycosylation is present at asparagine 79. Aspartate 94 is a catalytic residue. A disulfide bond links cysteine 107 and cysteine 112. N-linked (GlcNAc...) asparagine glycosylation occurs at asparagine 130. An intrachain disulfide couples cysteine 268 to cysteine 272. Aspartate 277 is an active-site residue. A disulfide bridge links cysteine 311 with cysteine 345. N-linked (GlcNAc...) asparagine glycosylation is present at asparagine 348.

It belongs to the peptidase A1 family. In terms of tissue distribution, expressed throughout the chorion, with the signal localized exclusively over the trophectoderm.

The protein resides in the secreted. The protein localises to the extracellular space. Its function is as follows. Appears to be proteolytically inactive. The sequence is that of Pregnancy-associated glycoprotein 1 from Sus scrofa (Pig).